A 99-amino-acid polypeptide reads, in one-letter code: Integration host factor subunit alpha (99 aa).

The segment at Phe49–Ile73 is disordered.

Belongs to the bacterial histone-like protein family. As to quaternary structure, heterodimer of an alpha and a beta chain.

Functionally, this protein is one of the two subunits of integration host factor, a specific DNA-binding protein that functions in genetic recombination as well as in transcriptional and translational control. The sequence is that of Integration host factor subunit alpha (ihfA) from Serratia marcescens.